A 517-amino-acid chain; its full sequence is DNA-binding protein Ikaros (517 aa).

Residues 1-71 are disordered; it reads MDVDEGQDMS…QSDEENGRAC (71 aa). A Phosphoserine modification is found at serine 13. Phosphothreonine is present on threonine 23. Polar residues predominate over residues 37-47; the sequence is LSTTSGAQQNS. Residue lysine 58 forms a Glycyl lysine isopeptide (Lys-Gly) (interchain with G-Cter in SUMO) linkage. Phosphoserine occurs at positions 63 and 101. The C2H2-type 1 zinc-finger motif lies at 117–139; that stretch reads LKCDICGIVCIGPNVLMVHKRSH. At threonine 140 the chain carries Phosphothreonine. The segment at 144-166 adopts a C2H2-type 2 zinc-finger fold; that stretch reads FQCNQCGASFTQKGNLLRHIKLH. Residues 153-162 form a required for both high-affinity DNA binding and pericentromeric heterochromatin localization region; the sequence is FTQKGNLLRH. Residue serine 167 is modified to Phosphoserine. The C2H2-type 3 zinc-finger motif lies at 172–194; that stretch reads FKCHLCNYACRRRDALTGHLRTH. Positions 179 to 194 are required for both high-affinity DNA binding and pericentromeric heterochromatin localization; the sequence is YACRRRDALTGHLRTH. Position 195 is a phosphoserine (serine 195). The C2H2-type 4 zinc finger occupies 200–223; it reads HKCGYCGRSYKQRSSLEEHKERCH. Lysine 239 is covalently cross-linked (Glycyl lysine isopeptide (Lys-Gly) (interchain with G-Cter in SUMO)). 9 positions are modified to phosphoserine: serine 259, serine 287, serine 293, serine 357, serine 360, serine 384, serine 386, serine 388, and serine 392. A disordered region spans residues 376-400; that stretch reads SVSSEREASPSNSCQDSTDTESNAE. The residue at position 393 (threonine 393) is a Phosphothreonine. A phosphoserine mark is found at serine 397 and serine 440. 2 consecutive C2H2-type zinc fingers follow at residues 457-479 and 488-512; these read YKCE…MGCH and FECN…RGEH. The interval 463–466 is required for binding PP1CC; the sequence is RVLF.

The protein belongs to the Ikaros C2H2-type zinc-finger protein family. As to quaternary structure, heterodimer with other IKAROS family members. Interacts with IKZF4 and IKZF5. Component of the chromatin-remodeling NuRD repressor complex which includes at least HDAC1, HDAC2, RBBP4, RBBP7, IKZF1, MTA2, MBD2, MBD3, MTA1L1, CHD3 and CHD4. Interacts directly with the CHD4 component of the NuRD complex. Interacts directly with SMARCA4; the interaction associates IKFZ1 with the BAF complex. Interacts with SUMO1; the interaction sumoylates IKAROS, promoted by PIAS2 and PIAS3. Interacts with PIAS2 (isoform alpha); the interaction promotes sumoylation and reduces transcription repression. Interacts, to a lesser extent, with PIAS3. Interacts with PPP1CC; the interaction targets PPP1CC to pericentromeric heterochromatin, dephosphorylates IKAROS, stabilizes it and prevents it from degradation. Interacts with IKZF3. Post-translationally, phosphorylation at Ser-357 and Ser-360 downstream of SYK induces nuclear translocation. Phosphorylation controls cell-cycle progression from late G(1) stage to S stage. Hyperphosphorylated during G2/M phase. Dephosphorylated state during late G(1) phase. Phosphorylation on Thr-140 is required for DNA and pericentromeric location during mitosis. CK2 is the main kinase, in vitro. GSK3 and CDK may also contribute to phosphorylation of the C-terminal serine and threonine residues. Phosphorylation on these C-terminal residues reduces the DNA-binding ability. Phosphorylation/dephosphorylation events on Ser-13 and Ser-293 regulate TDT expression during thymocyte differentiation. Dephosphorylation by protein phosphatase 1 regulates stability and pericentromeric heterochromatin location. Phosphorylated in both lymphoid and non-lymphoid tissues. Sumoylated. Simultaneous sumoylation on the 2 sites results in a loss of both HDAC-dependent and HDAC-independent repression. Has no effect on pericentromeric heterochromatin location. Desumoylated by SENP1. In terms of processing, polyubiquitinated. In terms of tissue distribution, strongly expressed in T-cells and their progenitors,in B-cells, and in all early embryonic retinal progenitor cells (RPCs). Isoforms V and VI are the predominant isoforms in lymphocytes.

It is found in the nucleus. It localises to the cytoplasm. Transcription regulator of hematopoietic cell differentiation. Binds gamma-satellite DNA. Binds with higher affinity to gamma satellite A. Plays a role in the development of lymphocytes, B- and T-cells. Binds and activates the enhancer (delta-A element) of the CD3-delta gene. Repressor of the TDT (terminal deoxynucleotidyltransferase) gene during thymocyte differentiation. Regulates transcription through association with both HDAC-dependent and HDAC-independent complexes. Targets the 2 chromatin-remodeling complexes, NuRD and BAF (SWI/SNF), in a single complex (PYR complex), to the beta-globin locus in adult erythrocytes. Increases normal apoptosis in adult erythroid cells. Confers early temporal competence to retinal progenitor cells (RPCs). Function is isoform-specific and is modulated by dominant-negative inactive isoforms. The chain is DNA-binding protein Ikaros (Ikzf1) from Mus musculus (Mouse).